Consider the following 489-residue polypeptide: GTPase Der (489 aa).

2 consecutive EngA-type G domains span residues 3–166 and 200–373; these read PVVA…AEAM and IKLA…ESAT. Residues 9 to 16, 56 to 60, 118 to 121, 206 to 213, 253 to 257, and 318 to 321 contribute to the GTP site; these read GRPNVGKS, DTGGI, NKVD, GKPNVGKS, DTAGV, and NKWD. Residues 374–458 form the KH-like domain; the sequence is RRVSTSMLTR…PIQVRFQEGG (85 aa).

It belongs to the TRAFAC class TrmE-Era-EngA-EngB-Septin-like GTPase superfamily. EngA (Der) GTPase family. Associates with the 50S ribosomal subunit.

Its function is as follows. GTPase that plays an essential role in the late steps of ribosome biogenesis. In Shewanella loihica (strain ATCC BAA-1088 / PV-4), this protein is GTPase Der.